The following is a 349-amino-acid chain: Divinyl chlorophyll a/b light-harvesting protein PcbB (349 aa).

6 consecutive transmembrane segments (helical) span residues 27–47 (FIAA…AATL), 57–77 (LPMG…GIGF), 91–113 (IAIL…SVYF), 201–221 (VMGG…FHIA), 241–261 (AILS…AFWA), and 306–326 (LVNV…WHAL).

Belongs to the PsbB/PsbC family. IsiA/Pcb subfamily. The antenna complex consists of divinyl chlorophylls (a and b) and divinyl chlorophyll a/b binding proteins and binds more divinyl chlorophyll b than does the antenna complex from high-light-adapted Prochlorococcus. The cofactor is divinyl chlorophyll a. Divinyl chlorophyll b serves as cofactor.

The protein localises to the cellular thylakoid membrane. Functionally, the antenna complex functions as a light receptor, it captures and delivers excitation energy to photosystems II and I. The Prochlorales pcb genes are not related to higher plant LHCs. This chain is Divinyl chlorophyll a/b light-harvesting protein PcbB (pcbB), found in Prochlorococcus marinus (strain SARG / CCMP1375 / SS120).